Reading from the N-terminus, the 410-residue chain is Serine hydroxymethyltransferase (410 aa).

(6S)-5,6,7,8-tetrahydrofolate-binding positions include L119 and 123-125; that span reads GHL. K228 carries the post-translational modification N6-(pyridoxal phosphate)lysine. 351-353 contributes to the (6S)-5,6,7,8-tetrahydrofolate binding site; that stretch reads SPF.

This sequence belongs to the SHMT family. Homodimer. Pyridoxal 5'-phosphate serves as cofactor.

Its subcellular location is the cytoplasm. It catalyses the reaction (6R)-5,10-methylene-5,6,7,8-tetrahydrofolate + glycine + H2O = (6S)-5,6,7,8-tetrahydrofolate + L-serine. It participates in one-carbon metabolism; tetrahydrofolate interconversion. Its pathway is amino-acid biosynthesis; glycine biosynthesis; glycine from L-serine: step 1/1. In terms of biological role, catalyzes the reversible interconversion of serine and glycine with tetrahydrofolate (THF) serving as the one-carbon carrier. This reaction serves as the major source of one-carbon groups required for the biosynthesis of purines, thymidylate, methionine, and other important biomolecules. Also exhibits THF-independent aldolase activity toward beta-hydroxyamino acids, producing glycine and aldehydes, via a retro-aldol mechanism. The sequence is that of Serine hydroxymethyltransferase from Clostridium perfringens (strain 13 / Type A).